The chain runs to 262 residues: Probable carboxylesterase Culp3 (262 aa).

The signal sequence occupies residues 1-41 (MNNRPIRLLTSGRAGLGAGALITAVVLLIALGAVWTLVAFA). A disulfide bridge links cysteine 44 with cysteine 114. Catalysis depends on serine 125, which acts as the Nucleophile. A disulfide bridge links cysteine 188 with cysteine 195. Residue aspartate 192 is part of the active site. Histidine 206 (proton donor/acceptor) is an active-site residue. Residues 241–262 (LPGSVLQMPGTAAPAPESLHGR) are disordered.

It belongs to the cutinase family.

It localises to the secreted. This is Probable carboxylesterase Culp3 (cut3) from Mycobacterium tuberculosis (strain CDC 1551 / Oshkosh).